The sequence spans 658 residues: Threonine--tRNA ligase (658 aa).

The 64-residue stretch at 1–64 (MSNTVSLQFP…GASGKVEIIT (64 aa)) folds into the TGS domain. The segment at 246-548 (DHRRLGREMD…LIENFAGHMP (303 aa)) is catalytic. Zn(2+)-binding residues include C343, H394, and H525.

Belongs to the class-II aminoacyl-tRNA synthetase family. As to quaternary structure, homodimer. Zn(2+) is required as a cofactor.

The protein localises to the cytoplasm. The catalysed reaction is tRNA(Thr) + L-threonine + ATP = L-threonyl-tRNA(Thr) + AMP + diphosphate + H(+). Its function is as follows. Catalyzes the attachment of threonine to tRNA(Thr) in a two-step reaction: L-threonine is first activated by ATP to form Thr-AMP and then transferred to the acceptor end of tRNA(Thr). Also edits incorrectly charged L-seryl-tRNA(Thr). The sequence is that of Threonine--tRNA ligase from Brucella canis (strain ATCC 23365 / NCTC 10854 / RM-666).